The sequence spans 344 residues: MSQSLFSLAFGVGTQNRQEAWLEVFYALPLLKPSSEIVAAVAPILGYAAGNQALTFTSQQAYQLADALKGIDAAQSALLSRLAESQKPLVATLLAEDAAPSSTAEAYLKLHLLSHRLVKPHAVNLSGIFPLLPNVAWTNIGAVDLAELAELQLEARLKGKLLEVFSVDKFPKMTDYVVPAGVRIADTARVRLGAYIGEGTTVMHEGFVNFNAGTEGPGMIEGRVSAGVFVGKGSDLGGGCSTMGTLSGGGNIVISVGEGCLIGANAGIGIPLGDRNIVEAGLYITAGTKVALLDEQNALVKVVKARDLAGQPDLLFRRNSQNGAVECKTNKTAIELNEALHAHN.

E205 is a Mg(2+) binding site. The active-site Acyl-anhydride intermediate is the E221. Residues R223, G238, S241, A264, E279–A280, G287–K289, K304, and R317–S320 contribute to the succinyl-CoA site.

The protein belongs to the type 2 tetrahydrodipicolinate N-succinyltransferase family. Homotrimer. Magnesium ions are not essential for catalysis. is required as a cofactor.

It is found in the cytoplasm. It catalyses the reaction (S)-2,3,4,5-tetrahydrodipicolinate + succinyl-CoA + H2O = (S)-2-succinylamino-6-oxoheptanedioate + CoA. The protein operates within amino-acid biosynthesis; L-lysine biosynthesis via DAP pathway; LL-2,6-diaminopimelate from (S)-tetrahydrodipicolinate (succinylase route): step 1/3. Its activity is regulated as follows. Weakly inhibited by D-2-aminopimelate. Functionally, catalyzes the conversion of the cyclic tetrahydrodipicolinate (THDP) into the acyclic N-succinyl-L-2-amino-6-oxopimelate using succinyl-CoA. Displays succinyl transferase activity with L-2-aminopimelate and succinyl-CoA as substrates. The polypeptide is 2,3,4,5-tetrahydropyridine-2,6-dicarboxylate N-succinyltransferase (Pseudomonas aeruginosa (strain ATCC 15692 / DSM 22644 / CIP 104116 / JCM 14847 / LMG 12228 / 1C / PRS 101 / PAO1)).